The chain runs to 256 residues: MLRIADKTFDSHLFTGTGKFASAQLMVDAIRASGSQLVTLAMKRVDLRKPNDAILSPLLEAGVTLLPNTSGAKTAEEAIFAAQLAREALGTHWLKLEIHPDARWLLPDPIETLKAAGELVKQGFVVLPYCGADPVLCKRLEEVGCAAVMPLGAPIGSNQGLETRAMLEIIIQQATVPVVVDAGIGVPSHATQALEMGADAVLVNTAIAVANDPVMMANAFRLAVEAGVLARQAVPGNRSVYASATSPLTGFLEVSA.

Lys95 (schiff-base intermediate with DXP) is an active-site residue. Residues Gly156, 182 to 183 (AG), and 204 to 205 (NT) contribute to the 1-deoxy-D-xylulose 5-phosphate site.

The protein belongs to the ThiG family. Homotetramer. Forms heterodimers with either ThiH or ThiS.

The protein localises to the cytoplasm. It catalyses the reaction [ThiS sulfur-carrier protein]-C-terminal-Gly-aminoethanethioate + 2-iminoacetate + 1-deoxy-D-xylulose 5-phosphate = [ThiS sulfur-carrier protein]-C-terminal Gly-Gly + 2-[(2R,5Z)-2-carboxy-4-methylthiazol-5(2H)-ylidene]ethyl phosphate + 2 H2O + H(+). It participates in cofactor biosynthesis; thiamine diphosphate biosynthesis. Catalyzes the rearrangement of 1-deoxy-D-xylulose 5-phosphate (DXP) to produce the thiazole phosphate moiety of thiamine. Sulfur is provided by the thiocarboxylate moiety of the carrier protein ThiS. In vitro, sulfur can be provided by H(2)S. The sequence is that of Thiazole synthase from Salmonella arizonae (strain ATCC BAA-731 / CDC346-86 / RSK2980).